A 256-amino-acid polypeptide reads, in one-letter code: Thiazole synthase (256 aa).

The active-site Schiff-base intermediate with DXP is the Lys-95. 1-deoxy-D-xylulose 5-phosphate is bound by residues Gly-156, 182–183 (AG), and 204–205 (NT).

Belongs to the ThiG family. As to quaternary structure, homotetramer. Forms heterodimers with either ThiH or ThiS.

The protein resides in the cytoplasm. It carries out the reaction [ThiS sulfur-carrier protein]-C-terminal-Gly-aminoethanethioate + 2-iminoacetate + 1-deoxy-D-xylulose 5-phosphate = [ThiS sulfur-carrier protein]-C-terminal Gly-Gly + 2-[(2R,5Z)-2-carboxy-4-methylthiazol-5(2H)-ylidene]ethyl phosphate + 2 H2O + H(+). The protein operates within cofactor biosynthesis; thiamine diphosphate biosynthesis. Catalyzes the rearrangement of 1-deoxy-D-xylulose 5-phosphate (DXP) to produce the thiazole phosphate moiety of thiamine. Sulfur is provided by the thiocarboxylate moiety of the carrier protein ThiS. In vitro, sulfur can be provided by H(2)S. In Salmonella arizonae (strain ATCC BAA-731 / CDC346-86 / RSK2980), this protein is Thiazole synthase.